A 539-amino-acid polypeptide reads, in one-letter code: Aluminum-activated malate transporter 13 (539 aa).

6 helical membrane-spanning segments follow: residues 57 to 77 (VGVALTLVSLLYLMEPFFEGV), 80 to 100 (NALWAVMTVVVVLEFSAGATL), 107 to 127 (GLGTLIAGSLAFFIEWVAIHS), 130 to 150 (ILGGIFIGTSVFTIGSMITYM), 165 to 185 (LVFLLTFNLITVSSYRVDTVI), and 192 to 212 (LYTIGMGIGICLFMSLLFFPI).

Belongs to the aromatic acid exporter (TC 2.A.85) family.

It is found in the membrane. Malate transporter. The protein is Aluminum-activated malate transporter 13 (ALMT13) of Arabidopsis thaliana (Mouse-ear cress).